Reading from the N-terminus, the 416-residue chain is E3 ubiquitin-protein ligase RNFT1 (416 aa).

2 disordered regions span residues 1 to 50 (MKHR…MSLP) and 68 to 117 (DLSS…DSRE). The span at 7-19 (HERQSSTESKNLK) shows a compositional bias: basic and acidic residues. Composition is skewed to polar residues over residues 20 to 45 (ETTQLIMQSSSDHTHHQLGSNDSPSA) and 68 to 80 (DLSSQDSQHVARS). The segment covering 81–100 (NSRRVRPSTHGRSPSRHGHT) has biased composition (basic residues). Helical transmembrane passes span 146-166 (LVVQHITGISVGIGLLTTFLY), 184-204 (LQCLWVLVFLLFSSFLLYYTF), 214-234 (VFMNPSLGPLHFFDALWVVGI), 237-257 (FIGKFFFMGLKCIILLVPSFV), 265-287 (YWYMALEELAQCYCTLVSTPVWF), and 302-322 (WHFGILLALLYLILKILIIFG). The required for ubiquitin ligase activity and for protection against ER stress-induced cell death stretch occupies residues 349–400 (CSEADGMCAICQAEFTKPIALICQHVFCEECISSWFNKEKTCPLCRTLISNH). Residues 356–394 (CAICQAEFTKPIALICQHVFCEECISSWFNKEKTCPLCR) form an RING-type zinc finger.

Its subcellular location is the endoplasmic reticulum membrane. The catalysed reaction is S-ubiquitinyl-[E2 ubiquitin-conjugating enzyme]-L-cysteine + [acceptor protein]-L-lysine = [E2 ubiquitin-conjugating enzyme]-L-cysteine + N(6)-ubiquitinyl-[acceptor protein]-L-lysine.. The protein operates within protein modification; protein ubiquitination. Functionally, E3 ubiquitin-protein ligase that acts in the endoplasmic reticulum (ER)-associated degradation (ERAD) pathway, which targets misfolded proteins that accumulate in the endoplasmic reticulum (ER) for ubiquitination and subsequent proteasome-mediated degradation. Protects cells from ER stress-induced apoptosis. The sequence is that of E3 ubiquitin-protein ligase RNFT1 (rnft1) from Xenopus laevis (African clawed frog).